A 312-amino-acid polypeptide reads, in one-letter code: Ribosomal RNA small subunit methyltransferase H (312 aa).

S-adenosyl-L-methionine contacts are provided by residues 37-39, D57, F83, and D104; that span reads GGH.

The protein belongs to the methyltransferase superfamily. RsmH family.

The protein resides in the cytoplasm. It catalyses the reaction cytidine(1402) in 16S rRNA + S-adenosyl-L-methionine = N(4)-methylcytidine(1402) in 16S rRNA + S-adenosyl-L-homocysteine + H(+). In terms of biological role, specifically methylates the N4 position of cytidine in position 1402 (C1402) of 16S rRNA. The polypeptide is Ribosomal RNA small subunit methyltransferase H (Malacoplasma penetrans (strain HF-2) (Mycoplasma penetrans)).